The sequence spans 435 residues: Angio-associated migratory cell protein (435 aa).

Positions 1-65 (MESESESGAA…EEEEEGNEEG (65 aa)) are disordered. Serine 20 bears the Phosphoserine mark. Residues 39–63 (DPDDLAQEMEDVDFEEEEEEEEGNE) are compositionally biased toward acidic residues. WD repeat units follow at residues 90–130 (LHSA…LLFE), 133–172 (GHKDSVTCAGFSHDSTLVATGDMSGLLKVWQVDTKEEVWS), 174–213 (EAGDLEWMEWHPRAPVLLAGTADGNTWMWKVPNGDCKTFQ), 215–255 (PNCP…HVLK), 259–300 (GHQG…GVFR), 316–355 (SESNSVESLGFCSVMPLAAVGYLDGTLAIYDLSTQTLRHQ), 357–396 (QHQSGIVQLLWEAGTAVVYTCSLDGIVRLWDARTGRLLTD), and 399–434 (GHTAEILDFALSKDASLVVTTSGDHKAKVFCVQRPD).

It is found in the cell membrane. The protein localises to the cytoplasm. In terms of biological role, plays a role in angiogenesis and cell migration. In smooth muscle cell migration, may act through the RhoA pathway. The polypeptide is Angio-associated migratory cell protein (AAMP) (Canis lupus familiaris (Dog)).